A 358-amino-acid chain; its full sequence is Oxidase FUB9 (358 aa).

In terms of domain architecture, FMN hydroxy acid dehydrogenase spans Ser6–Ala350. Tyr32 is a binding site for a 2-oxocarboxylate. FMN is bound by residues Ser114, Gln138, and Thr166. Residue Arg175 coordinates a 2-oxocarboxylate. Lys221 lines the FMN pocket. His245 serves as the catalytic Proton acceptor. Arg248 lines the a 2-oxocarboxylate pocket. FMN is bound by residues Asp276–Arg280 and Gly299–Arg300.

Belongs to the FMN-dependent alpha-hydroxy acid dehydrogenase family. It depends on FMN as a cofactor.

Its pathway is mycotoxin biosynthesis. Functionally, oxidase; part of the gene cluster that mediates the biosynthesis of fusaric acid, a mycotoxin with low to moderate toxicity to animals and humans, but with high phytotoxic properties. L-aspartate is suggested as fusaric acid amino acid precursor that is activated and further processed to O-acetyl-L-homoserine by cluster enzymes aspartate kinase FUB3 and homoserine O-acetyltransferase FUB5, as well as enzymes of the primary metabolism. The polyketide synthase (PKS) FUB1 generates the triketide trans-2-hexenal which is presumptively released by the hydrolase FUB4 and linked to the NRPS-bound amino acid precursor by NAD(P)-dependent dehydrogenase FUB6. FUB1, FUB4, and the non-canonical NRPS Fub8 may form an enzyme complex. Further processing of the NRPS-bound intermediate might be carried out by FUB6 and the sulfhydrylase FUB7, enabling a spontaneous electrocyclization to close the carbon backbone of fusaric acid. Dihydrofusaric acid is likely to be released via reduction by the thioester reductase (TR) domain of FUB8 whereupon the final oxidation to fusaric acid may (also) be performed by the FMN-dependent dehydrogenase FUB9. The sequence is that of Oxidase FUB9 from Gibberella fujikuroi (strain CBS 195.34 / IMI 58289 / NRRL A-6831) (Bakanae and foot rot disease fungus).